Here is a 356-residue protein sequence, read N- to C-terminus: Heat-inducible transcription repressor HrcA (356 aa).

This sequence belongs to the HrcA family.

Functionally, negative regulator of class I heat shock genes (grpE-dnaK-dnaJ and groELS operons). Prevents heat-shock induction of these operons. The chain is Heat-inducible transcription repressor HrcA from Bartonella henselae (strain ATCC 49882 / DSM 28221 / CCUG 30454 / Houston 1) (Rochalimaea henselae).